The following is a 507-amino-acid chain: Chromosomal replication initiator protein DnaA (507 aa).

Residues M1–E72 form a domain I, interacts with DnaA modulators region. The tract at residues E72–G162 is domain II. The domain III, AAA+ region stretch occupies residues N163–A384. Positions 207, 209, 210, and 211 each coordinate ATP. The tract at residues Q385–S507 is domain IV, binds dsDNA.

It belongs to the DnaA family. In terms of assembly, oligomerizes as a right-handed, spiral filament on DNA at oriC.

The protein resides in the cytoplasm. In terms of biological role, plays an essential role in the initiation and regulation of chromosomal replication. ATP-DnaA binds to the origin of replication (oriC) to initiate formation of the DNA replication initiation complex once per cell cycle. Binds the DnaA box (a 9 base pair repeat at the origin) and separates the double-stranded (ds)DNA. Forms a right-handed helical filament on oriC DNA; dsDNA binds to the exterior of the filament while single-stranded (ss)DNA is stabiized in the filament's interior. The ATP-DnaA-oriC complex binds and stabilizes one strand of the AT-rich DNA unwinding element (DUE), permitting loading of DNA polymerase. After initiation quickly degrades to an ADP-DnaA complex that is not apt for DNA replication. Binds acidic phospholipids. This Onion yellows phytoplasma (strain OY-M) protein is Chromosomal replication initiator protein DnaA.